Reading from the N-terminus, the 240-residue chain is Ribonuclease 3 (240 aa).

In terms of domain architecture, RNase III spans 9-141; sequence VEEFQKETGI…LLAAIYLDQG (133 aa). Glutamate 54 is a binding site for Mg(2+). Aspartate 58 is an active-site residue. Residues aspartate 127 and glutamate 130 each contribute to the Mg(2+) site. Glutamate 130 is a catalytic residue. One can recognise a DRBM domain in the interval 168–237; that stretch reads DYKTALQEIV…ARIAYEKLLK (70 aa).

The protein belongs to the ribonuclease III family. In terms of assembly, homodimer. Mg(2+) is required as a cofactor.

The protein resides in the cytoplasm. The catalysed reaction is Endonucleolytic cleavage to 5'-phosphomonoester.. In terms of biological role, digests double-stranded RNA. Involved in the processing of primary rRNA transcript to yield the immediate precursors to the large and small rRNAs (23S and 16S). Also processes some mRNAs, and tRNAs when they are encoded in the rRNA operon. Probably processes pre-crRNA and tracrRNA of type II CRISPR loci if present in the organism. The protein is Ribonuclease 3 (rnc) of Thermotoga maritima (strain ATCC 43589 / DSM 3109 / JCM 10099 / NBRC 100826 / MSB8).